A 276-amino-acid chain; its full sequence is Probable endonuclease 4 (276 aa).

The Zn(2+) site is built by histidine 70, histidine 108, glutamate 144, aspartate 177, histidine 180, histidine 211, aspartate 224, histidine 226, and glutamate 256.

The protein belongs to the AP endonuclease 2 family. Requires Zn(2+) as cofactor.

It carries out the reaction Endonucleolytic cleavage to 5'-phosphooligonucleotide end-products.. Endonuclease IV plays a role in DNA repair. It cleaves phosphodiester bonds at apurinic or apyrimidinic (AP) sites, generating a 3'-hydroxyl group and a 5'-terminal sugar phosphate. The polypeptide is Probable endonuclease 4 (Metamycoplasma arthritidis (strain 158L3-1) (Mycoplasma arthritidis)).